The sequence spans 278 residues: Shikimate dehydrogenase (NADP(+)) (278 aa).

Residues 19 to 21 (SRS) and Thr66 contribute to the shikimate site. Residue Lys70 is the Proton acceptor of the active site. Residues Asn91 and Asp106 each coordinate shikimate. NADP(+)-binding positions include 129–133 (GAGGA) and Phe221. A shikimate-binding site is contributed by Tyr223. Residue Gly242 participates in NADP(+) binding.

The protein belongs to the shikimate dehydrogenase family. As to quaternary structure, homodimer.

It carries out the reaction shikimate + NADP(+) = 3-dehydroshikimate + NADPH + H(+). It functions in the pathway metabolic intermediate biosynthesis; chorismate biosynthesis; chorismate from D-erythrose 4-phosphate and phosphoenolpyruvate: step 4/7. Functionally, involved in the biosynthesis of the chorismate, which leads to the biosynthesis of aromatic amino acids. Catalyzes the reversible NADPH linked reduction of 3-dehydroshikimate (DHSA) to yield shikimate (SA). In Anaeromyxobacter dehalogenans (strain 2CP-1 / ATCC BAA-258), this protein is Shikimate dehydrogenase (NADP(+)).